The chain runs to 294 residues: Zinc finger protein CONSTANS-LIKE 3 (294 aa).

Zn(2+) is bound by residues Cys-8, Cys-11, Cys-31, His-36, Cys-51, Cys-54, Cys-74, and His-79. The segment at 8–50 adopts a B box-type 1; atypical zinc-finger fold; the sequence is CDSCKSTAATLFCRADAAFLCGDCDGKIHTANKLASRHERVWL. The segment at 51-93 adopts a B box-type 2; atypical zinc-finger fold; that stretch reads CEVCEQAPAHVTCKADAAALCVTCDRDIHSANPLSRRHERVPI. Residues 229–271 enclose the CCT domain; that stretch reads REARVLRYREKRKNRKFEKTIRYASRKAYAEMRPRIKGRFAKR.

This sequence belongs to the CONSTANS family.

It is found in the nucleus. The polypeptide is Zinc finger protein CONSTANS-LIKE 3 (COL3) (Arabidopsis thaliana (Mouse-ear cress)).